The primary structure comprises 919 residues: MTDFLRDDIRFLGRILGEVIAEQEGQEVYELVEQARLTSFDIAKGNAEMDSLVQVFDGITPAKATPIARAFSHFALLANLAEDLHDEELREQALDAGDTPPDSTLDATWLKLNEGNVGAEAVADVLRNAEVAPVLTAHPTETRRRTVFDAQKWITTHMRERHALQSAEPTARTQSKLDEIEKNIRRRITILWQTALIRVARPRIEDEIEVGLRYYKLSLLEEIPRINRDVAVELRERFGEDVPLKPVVKPGSWIGGDHDGNPYVTAGTVEYSTRRAAETVLKYYARQLHSLEHELSLSDRMNEVTPQLLELADAGHNDVPSRVDEPYRRAVHGVRGRILATTAELIGEDAVEGVWFKVFTPYASPEEFLNDALTIDHSLRESNDVLIADDRLSVLISAIESFGFNLYSLDLRQNSESYEDVLTELFERAQVTANYRELSEEEKLEVLLKELRSPRPLIPHGSDEYSEVTDRELGIFRTASEAVKKFGPRMVPHCIISMASSVTDVLEPMVLLKEFGLIAANGDNPRGTVDVIPLFETIEDLRAGAGILGELWKIDLYRNYLLQRDNVQEVMLGYSDSNKDGGYFSANWALYDAELQLVELCRSAGVKLRLFHGRGGTVGRGGGPSYDAILAQPKGAVQGSVRITEQGEIISAKYGNPETARRNLEALVSATLEASLLDVSELTDHQRAYDIMSEISELSLKKYTSLVHEDQGFIDYFTQSTPLQEIGSLNIGSRPSSRKQTSSVEDLRAIPWVLSWSQSRVMLPGWFGVGTALEQWIGEGEQATQRIAELQTLNESWPFFTSVLDNMAQVMSKAELRLAKLYADLIPDREVAERVYSVIHEEYFLTKKMFCVITGSDDLLDDNPLLARSVQRRYPYLLPLNVIQVEMMRRYRKGDQSEQVSRNIQLTMNGLSTALRNSG.

Catalysis depends on residues His138 and Lys579.

The protein belongs to the PEPCase type 1 family. Requires Mg(2+) as cofactor.

It carries out the reaction oxaloacetate + phosphate = phosphoenolpyruvate + hydrogencarbonate. In terms of biological role, forms oxaloacetate, a four-carbon dicarboxylic acid source for the tricarboxylic acid cycle. This is Phosphoenolpyruvate carboxylase from Corynebacterium glutamicum (Brevibacterium saccharolyticum).